We begin with the raw amino-acid sequence, 868 residues long: Monofunctional pimaradiene synthase (868 aa).

Mg(2+) contacts are provided by aspartate 620, aspartate 624, asparagine 764, threonine 768, and glutamate 772.

Belongs to the terpene synthase family. Tpsd subfamily. Mg(2+) is required as a cofactor.

It carries out the reaction (+)-copalyl diphosphate = (-)-pimara-8(14),15-diene + diphosphate. Its pathway is terpene metabolism; oleoresin biosynthesis. Its function is as follows. Involved in defensive oleoresin formation in conifers in response to insect attack or other injury. Involved in diterpene (C20) olefins biosynthesis. Monofunctional enzyme lacking the DXDD motif in the class II active site relevant for the cyclization of geranylgeranyl diphosphate (GGPP). Requires (+)-copalyl diphosphate ((+)-CPP) as substrate, but no activity with GGPP or ent-CPP. Pimaradiene is the major products of the enzyme. In Pinus banksiana (Jack pine), this protein is Monofunctional pimaradiene synthase.